A 557-amino-acid polypeptide reads, in one-letter code: TWiK family of potassium channels protein 7 (557 aa).

Disordered stretches follow at residues 1–34 (MTSSSRGYQRVDSSGDGGSLLMEEEGDNPHEALL) and 128–151 (DKSGHEDIDDESDDESKDEDEEEE). Topologically, residues 1-165 (MTSSSRGYQR…RKFAKLVLPH (165 aa)) are cytoplasmic. Acidic residues predominate over residues 134 to 151 (DIDDESDDESKDEDEEEE). The helical transmembrane segment at 166–186 (VALVLLTCTYTVIGALIFYSV) threads the bilayer. 2 N-linked (GlcNAc...) asparagine glycosylation sites follow: Asn-220 and Asn-237. The segment at residues 270 to 290 (SIFFAVTVVTTIGYGNPVPVT) is an intramembrane region (pore-forming). The chain crosses the membrane as a helical span at residues 295 to 315 (IWCILFSLLGIPLTLVTIADL). The Cytoplasmic segment spans residues 316 to 368 (GKFLSEHLVWLYGNYLKLKYLILSRHRKERREHVCEHCHSHGMGHDMNIEEKR). The chain crosses the membrane as a helical span at residues 369–389 (IPAFLVLAILIVYTAFGGVLM). An intramembrane region (pore-forming) is located at residues 397–417 (FFTSFYWSFITMTTVGFGDLM). Residues 426–446 (IILLYIILGLAITTMCIDLVG) traverse the membrane as a helical segment. Residues 447 to 557 (VQYIRKIHYF…SRYSLNRAFK (111 aa)) are Cytoplasmic-facing.

The protein belongs to the two pore domain potassium channel (TC 1.A.1.8) family.

Its subcellular location is the membrane. The polypeptide is TWiK family of potassium channels protein 7 (twk-7) (Caenorhabditis elegans).